A 309-amino-acid polypeptide reads, in one-letter code: Taste receptor type 2 member 20 (309 aa).

Residues 1–6 (MMSFLH) lie on the Extracellular side of the membrane. Residues 7–27 (IVFSILVVVAFILGNFANGFI) traverse the membrane as a helical segment. The Cytoplasmic portion of the chain corresponds to 28 to 46 (ALINFIAWVKRQKISSADQ). Residues 47 to 67 (IIAALAVSRVGLLWVILLHWY) traverse the membrane as a helical segment. The Extracellular portion of the chain corresponds to 68–79 (STVLNPTSSNLK). Residues 80–100 (VIIFISNAWAVTNHFSIWLAT) form a helical membrane-spanning segment. The Cytoplasmic portion of the chain corresponds to 101–125 (SLSIFYLLKIVNFSRLIFHHLKRKA). The helical transmembrane segment at 126–146 (KSVVLVIVLGSLFFLVCHLVM) threads the bilayer. Residues 147 to 178 (KNTYINVWTEECEGNVTWKIKLRNAMHLSNLT) are Extracellular-facing. Residues 179 to 199 (VAMLANLIPFTLTLISFLLLI) traverse the membrane as a helical segment. Over 200–229 (YSLCKHLKKMQLHGKGSQDPSTKIHIKALQ) the chain is Cytoplasmic. Residues 230–250 (TVTSFLILLAIYFLCLITSFW) form a helical membrane-spanning segment. Residues 251 to 259 (NSKMRPKEI) are Extracellular-facing. Residues 260–280 (VLMLCQAFGIIYPSFHSFILI) form a helical membrane-spanning segment. The Cytoplasmic portion of the chain corresponds to 281-309 (WGNKTLKQTFLSVLWQVTCWAKGQNQSTP).

The protein belongs to the G-protein coupled receptor T2R family.

It localises to the membrane. Its function is as follows. Receptor that may play a role in the perception of bitterness and is gustducin-linked. May play a role in sensing the chemical composition of the gastrointestinal content. The activity of this receptor may stimulate alpha gustducin, mediate PLC-beta-2 activation and lead to the gating of TRPM5. In Pan paniscus (Pygmy chimpanzee), this protein is Taste receptor type 2 member 20 (TAS2R20).